Consider the following 553-residue polypeptide: Phospholipase B-like 1 (553 aa).

The N-terminal stretch at 1 to 38 (MTRGGPGGRPGLPQPPPLLLLLLLLPLLLVTAEPPKPA) is a signal peptide. N71 carries an N-linked (GlcNAc...) (high mannose) asparagine; alternate glycan. N71 carries N-linked (GlcNAc...) (hybrid) asparagine; alternate glycosylation. The propeptide at 209-227 (LSPTKNGSLKVFKRWDMGH) is removed in mature form. N-linked (GlcNAc...) (high mannose) asparagine; alternate glycans are attached at residues N308 and N366. 2 N-linked (GlcNAc...) (hybrid) asparagine; alternate glycosylation sites follow: N308 and N366. N-linked (GlcNAc...) asparagine glycosylation is present at N411. Disulfide bonds link C470–C475 and C474–C489. A glycan (N-linked (GlcNAc...) (high mannose) asparagine; alternate) is linked at N526. Residue N526 is glycosylated (N-linked (GlcNAc...) (hybrid) asparagine; alternate).

This sequence belongs to the phospholipase B-like family. In terms of assembly, may form a homodimer, each monomer is composed of a chain A and a chain B. Post-translationally, the maturation cleavages that produces chains A and B are required to open the putative substrate binding pocket. Both chains A and B remain associated in the mature protein. In terms of tissue distribution, expressed in neutrophils and monocytes.

The protein localises to the lysosome. In terms of biological role, in view of the small size of the putative binding pocket, it has been proposed that it may act as an amidase or a peptidase. Exhibits a weak phospholipase activity, acting on various phospholipids, including phosphatidylcholine, phosphatidylinositol, phosphatidylethanolamine and lysophospholipids. This is Phospholipase B-like 1 (PLBD1) from Homo sapiens (Human).